A 152-amino-acid polypeptide reads, in one-letter code: Deoxyuridine 5'-triphosphate nucleotidohydrolase (152 aa).

Residues R72–G74, N85, and T89–D91 each bind substrate.

This sequence belongs to the dUTPase family. The cofactor is Mg(2+).

The catalysed reaction is dUTP + H2O = dUMP + diphosphate + H(+). It participates in pyrimidine metabolism; dUMP biosynthesis; dUMP from dCTP (dUTP route): step 2/2. Functionally, this enzyme is involved in nucleotide metabolism: it produces dUMP, the immediate precursor of thymidine nucleotides and it decreases the intracellular concentration of dUTP so that uracil cannot be incorporated into DNA. This Rhodopseudomonas palustris (strain BisB18) protein is Deoxyuridine 5'-triphosphate nucleotidohydrolase.